We begin with the raw amino-acid sequence, 235 residues long: Probable transcriptional regulatory protein JJD26997_0557 (235 aa).

This sequence belongs to the TACO1 family.

It localises to the cytoplasm. This Campylobacter jejuni subsp. doylei (strain ATCC BAA-1458 / RM4099 / 269.97) protein is Probable transcriptional regulatory protein JJD26997_0557.